The chain runs to 257 residues: Neurotrophin-3 (257 aa).

An N-terminal signal peptide occupies residues 1–18 (MSILFYVIFLAYLRGIQG). Residues 19–138 (NNMDQRSLPE…VANRTSRRKR (120 aa)) constitute a propeptide that is removed on maturation. The tract at residues 61 to 81 (STLPKAEAPREPERGGPAKSA) is disordered. Positions 67–76 (EAPREPERGG) are enriched in basic and acidic residues. N-linked (GlcNAc...) asparagine glycosylation occurs at asparagine 131. Disulfide bonds link cysteine 152–cysteine 217, cysteine 195–cysteine 246, and cysteine 205–cysteine 248.

Belongs to the NGF-beta family. Brain and peripheral tissues.

Its subcellular location is the secreted. Functionally, seems to promote the survival of visceral and proprioceptive sensory neurons. In Homo sapiens (Human), this protein is Neurotrophin-3 (NTF3).